A 205-amino-acid polypeptide reads, in one-letter code: Polyamine-modulated factor 1 (205 aa).

Residues 1–28 (MAEASSVNVGSGCAEKGPEELSQEPARP) are disordered. A coiled-coil region spans residues 140-190 (YLLQQRDALQRRVQRQEAENRQLADAVLAGRRQLEELQLQAQARQQAWQAL).

As to quaternary structure, component of the MIS12 complex composed of MIS12, DSN1, NSL1 and PMF1. Interacts with COPS7A. Interacts via its coiled-coil domain with the leucine-zipper domain of NFE2L2. The interaction with NFE2L2 is required for the transcriptional regulation of SSAT.

Its subcellular location is the nucleus. It localises to the chromosome. The protein localises to the centromere. The protein resides in the kinetochore. Its function is as follows. Part of the MIS12 complex which is required for normal chromosome alignment and segregation and kinetochore formation during mitosis. May act as a cotranscription partner of NFE2L2 involved in regulation of polyamine-induced transcription of SSAT. This chain is Polyamine-modulated factor 1 (PMF1), found in Bos taurus (Bovine).